The sequence spans 396 residues: Elongation factor Tu (396 aa).

One can recognise a tr-type G domain in the interval 10–206; it reads KPHVNVGTIG…VLDTYIPEPE (197 aa). Residues 19–26 are G1; sequence GHVDHGKT. A GTP-binding site is contributed by 19–26; sequence GHVDHGKT. Thr-26 provides a ligand contact to Mg(2+). A G2 region spans residues 60–64; that stretch reads GITIN. The interval 81-84 is G3; it reads DCPG. GTP contacts are provided by residues 81 to 85 and 136 to 139; these read DCPGH and NKCD. The G4 stretch occupies residues 136–139; it reads NKCD. A G5 region spans residues 174 to 176; it reads SAT.

The protein belongs to the TRAFAC class translation factor GTPase superfamily. Classic translation factor GTPase family. EF-Tu/EF-1A subfamily. Monomer.

It is found in the cytoplasm. The enzyme catalyses GTP + H2O = GDP + phosphate + H(+). Its function is as follows. GTP hydrolase that promotes the GTP-dependent binding of aminoacyl-tRNA to the A-site of ribosomes during protein biosynthesis. The protein is Elongation factor Tu of Psychrobacter arcticus (strain DSM 17307 / VKM B-2377 / 273-4).